A 754-amino-acid polypeptide reads, in one-letter code: Aspartyl/asparaginyl beta-hydroxylase (754 aa).

A disordered region spans residues 1-48; that stretch reads MAPRKNAKGGGGNSSSSSSGSPTGCTSGGSSSPGARRETKQGGLKNGR. At 1 to 56 the chain is on the cytoplasmic side; the sequence is MAPRKNAKGGGGNSSSSSSGSPTGCTSGGSSSPGARRETKQGGLKNGRKGGLSGSS. Positions 14–34 are enriched in low complexity; the sequence is SSSSSSGSPTGCTSGGSSSPG. Residue serine 15 is modified to Phosphoserine. The chain crosses the membrane as a helical; Signal-anchor for type II membrane protein span at residues 57–77; it reads FFTWFMVIALLGVWTSVAVVW. Residues 78–754 lie on the Lumenal side of the membrane; it reads FDLVDYEEVL…PHQRRSLPAI (677 aa). Asparagine 96 carries N-linked (GlcNAc...) asparagine glycosylation. Residues aspartate 109, aspartate 111, aspartate 113, aspartate 115, and aspartate 120 each contribute to the Ca(2+) site. Disordered stretches follow at residues 176 to 197 and 247 to 326; these read VYSEPGENLPQEPEGPAEELQP and EQEN…KKKK. Composition is skewed to basic and acidic residues over residues 261–284 and 309–318; these read DAERTYQETDDVTYRDYDEQDHAV and TNKKADEPGK. 5 TPR repeats span residues 337–370, 378–411, 450–483, 485–517, and 521–553; these read IKAELDAAEKLRKRGKIEEAVNAFEELVRKYPQS, AQCEDDLAEKRRSNEILRRAIETYQEAASLPDAP, TALKNDLGVGYLLIGDNDSAKKVYEEVLSVTPND, FAKVHYGFILKAQNKIAESIPYLKEGIESGDPG, and GRFYFHLGDAMQRVGNKEAYRWYELGHQRGHFA. The N-linked (GlcNAc...) asparagine glycan is linked to asparagine 466. Residue tryptophan 621 coordinates 2-oxoglutarate. An intrachain disulfide couples cysteine 637 to cysteine 644. Serine 664 lines the 2-oxoglutarate pocket. Histidine 675 contributes to the Fe cation binding site. Position 684–686 (684–686) interacts with 2-oxoglutarate; the sequence is RMH. Asparagine 702 is a glycosylation site (N-linked (GlcNAc...) asparagine). Residue histidine 721 participates in Fe cation binding. Arginine 731 contacts 2-oxoglutarate.

This sequence belongs to the aspartyl/asparaginyl beta-hydroxylase family. Monomer. The cofactor is Fe cation. Post-translationally, might be processed to the 56 kDa (AA 289-754) or 52 kDa (AA 311-754) forms in the lumen of the endoplasmic reticulum.

The protein resides in the endoplasmic reticulum membrane. It carries out the reaction L-aspartyl-[protein] + 2-oxoglutarate + O2 = 3-hydroxy-L-aspartyl-[protein] + succinate + CO2. Specifically hydroxylates an Asp or Asn residue in certain epidermal growth factor-like (EGF) domains of a number of proteins. In Bos taurus (Bovine), this protein is Aspartyl/asparaginyl beta-hydroxylase (ASPH).